The chain runs to 601 residues: Elongation factor 4 (601 aa).

The tr-type G domain occupies 7-189 (RNIRNFSIIA…AIVHRIPPPA (183 aa)). GTP-binding positions include 19–24 (DHGKST) and 136–139 (NKID).

It belongs to the TRAFAC class translation factor GTPase superfamily. Classic translation factor GTPase family. LepA subfamily.

The protein localises to the cell inner membrane. The catalysed reaction is GTP + H2O = GDP + phosphate + H(+). Functionally, required for accurate and efficient protein synthesis under certain stress conditions. May act as a fidelity factor of the translation reaction, by catalyzing a one-codon backward translocation of tRNAs on improperly translocated ribosomes. Back-translocation proceeds from a post-translocation (POST) complex to a pre-translocation (PRE) complex, thus giving elongation factor G a second chance to translocate the tRNAs correctly. Binds to ribosomes in a GTP-dependent manner. The sequence is that of Elongation factor 4 from Xanthomonas oryzae pv. oryzae (strain MAFF 311018).